The chain runs to 352 residues: Neuronal growth regulator 1 (352 aa).

The signal sequence occupies residues 1-35 (MVPLVRGAGGSHQWLAAVLLGLCCLLPAGRLAAPG). Ig-like C2-type domains lie at 36–132 (GDFP…VHLT), 137–219 (PKIF…KVTV), and 223–311 (PTIQ…LPLN). Residues Cys58 and Cys116 are joined by a disulfide bond. 2 N-linked (GlcNAc...) asparagine glycosylation sites follow: Asn71 and Asn153. 2 cysteine pairs are disulfide-bonded: Cys158–Cys201 and Cys243–Cys295. Asn273, Asn284, Asn292, and Asn305 each carry an N-linked (GlcNAc...) asparagine glycan. Residue Gly322 is the site of GPI-anchor amidated glycine attachment. Residues 323–352 (DAEVLFSCWYLVLTLSSLTSIFYLKNIILH) constitute a propeptide, removed in mature form.

Belongs to the immunoglobulin superfamily. IgLON family. Interacts with CEPU-1 and LAMP. In terms of processing, glycosylated. In terms of tissue distribution, expressed in embryonic retina, telencephalon, tectum, cerebellum and diencephalon (at protein level).

It is found in the cell membrane. Functionally, may be involved in cell-adhesion. May participate in the regulation of neurite outgrowth in the developing brain. This is Neuronal growth regulator 1 (NEGR1) from Gallus gallus (Chicken).